We begin with the raw amino-acid sequence, 639 residues long: tRNA uridine 5-carboxymethylaminomethyl modification enzyme MnmG (639 aa).

Position 13–18 (13–18) interacts with FAD; sequence GGGHAG. 274–288 serves as a coordination point for NAD(+); that stretch reads GPRYCPSIEDKIHRF.

The protein belongs to the MnmG family. As to quaternary structure, homodimer. Heterotetramer of two MnmE and two MnmG subunits. FAD serves as cofactor.

Its subcellular location is the cytoplasm. Its function is as follows. NAD-binding protein involved in the addition of a carboxymethylaminomethyl (cmnm) group at the wobble position (U34) of certain tRNAs, forming tRNA-cmnm(5)s(2)U34. The polypeptide is tRNA uridine 5-carboxymethylaminomethyl modification enzyme MnmG (Polynucleobacter asymbioticus (strain DSM 18221 / CIP 109841 / QLW-P1DMWA-1) (Polynucleobacter necessarius subsp. asymbioticus)).